The chain runs to 62 residues: UPF0291 protein CLD_1956 (62 aa).

The protein belongs to the UPF0291 family.

The protein localises to the cytoplasm. The protein is UPF0291 protein CLD_1956 of Clostridium botulinum (strain Okra / Type B1).